The primary structure comprises 1579 residues: MAP kinase kinase kinase SSK2 (1579 aa).

The tract at residues 1-70 is disordered; the sequence is MSHSDYFNYK…HSTQYFRSPN (70 aa). The segment covering 21 to 44 has biased composition (low complexity); it reads SSKMRQSSSSSSSRLRSESLGRNS. The span at 45-67 shows a compositional bias: polar residues; the sequence is NTTQARVASSPISPGLHSTQYFR. Phosphoserine is present on residues serine 57, serine 62, serine 78, and serine 118. Disordered stretches follow at residues 97-155 and 190-243; these read FFHQ…ESEI and SIMS…GSTT. Residues 104–118 are compositionally biased toward low complexity; the sequence is SGSSSSSARSSRRPS. Residues 127-139 are compositionally biased toward polar residues; that stretch reads NPQQSLPKLSTQP. Basic and acidic residues predominate over residues 144–155; it reads KKVEASKTESEI. Serine 290 carries the post-translational modification Phosphoserine. The Protein kinase domain occupies 1266–1558; the sequence is WQKRNFIGGG…AVELLMDPWI (293 aa). ATP is bound by residues 1272–1280 and lysine 1295; that span reads IGGGTFGRV. The Proton acceptor role is filled by aspartate 1390. Serine 1424 is modified (phosphoserine).

This sequence belongs to the protein kinase superfamily. STE Ser/Thr protein kinase family. MAP kinase kinase kinase subfamily. As to quaternary structure, interacts with by SSK1.

It catalyses the reaction L-seryl-[protein] + ATP = O-phospho-L-seryl-[protein] + ADP + H(+). It carries out the reaction L-threonyl-[protein] + ATP = O-phospho-L-threonyl-[protein] + ADP + H(+). Kinase involved in a signal transduction pathway that is activated by changes in the osmolarity of the extracellular environment. Activates the PBS2 MAP kinase kinase by phosphorylation. This Saccharomyces cerevisiae (strain ATCC 204508 / S288c) (Baker's yeast) protein is MAP kinase kinase kinase SSK2 (SSK2).